A 337-amino-acid polypeptide reads, in one-letter code: NADH-quinone oxidoreductase subunit H (337 aa).

Helical transmembrane passes span 9-29, 77-97, 110-130, 154-174, 181-201, 229-249, 274-294, and 313-333; these read FAKI…FTYV, FLIA…VIPF, LLYI…AGWA, MGFA…SGIV, FWEW…ISGV, MAFA…SFLA, VPGI…YLWF, and VLIP…YGGV.

This sequence belongs to the complex I subunit 1 family. As to quaternary structure, NDH-1 is composed of 14 different subunits. Subunits NuoA, H, J, K, L, M, N constitute the membrane sector of the complex.

The protein resides in the cell inner membrane. The enzyme catalyses a quinone + NADH + 5 H(+)(in) = a quinol + NAD(+) + 4 H(+)(out). Functionally, NDH-1 shuttles electrons from NADH, via FMN and iron-sulfur (Fe-S) centers, to quinones in the respiratory chain. The immediate electron acceptor for the enzyme in this species is believed to be ubiquinone. Couples the redox reaction to proton translocation (for every two electrons transferred, four hydrogen ions are translocated across the cytoplasmic membrane), and thus conserves the redox energy in a proton gradient. This subunit may bind ubiquinone. The sequence is that of NADH-quinone oxidoreductase subunit H from Halorhodospira halophila (strain DSM 244 / SL1) (Ectothiorhodospira halophila (strain DSM 244 / SL1)).